A 388-amino-acid polypeptide reads, in one-letter code: Succinate--CoA ligase [ADP-forming] subunit beta (388 aa).

In terms of domain architecture, ATP-grasp spans 9 to 244 (KQLFARYGLP…PSQEDSREAH (236 aa)). Residues lysine 46, 53–55 (GRG), glutamate 99, threonine 102, and glutamate 107 contribute to the ATP site. Mg(2+) contacts are provided by asparagine 199 and aspartate 213. Residues asparagine 264 and 321–323 (GIV) contribute to the substrate site.

It belongs to the succinate/malate CoA ligase beta subunit family. Heterotetramer of two alpha and two beta subunits. Requires Mg(2+) as cofactor.

The catalysed reaction is succinate + ATP + CoA = succinyl-CoA + ADP + phosphate. It carries out the reaction GTP + succinate + CoA = succinyl-CoA + GDP + phosphate. The protein operates within carbohydrate metabolism; tricarboxylic acid cycle; succinate from succinyl-CoA (ligase route): step 1/1. Succinyl-CoA synthetase functions in the citric acid cycle (TCA), coupling the hydrolysis of succinyl-CoA to the synthesis of either ATP or GTP and thus represents the only step of substrate-level phosphorylation in the TCA. The beta subunit provides nucleotide specificity of the enzyme and binds the substrate succinate, while the binding sites for coenzyme A and phosphate are found in the alpha subunit. This is Succinate--CoA ligase [ADP-forming] subunit beta from Erwinia tasmaniensis (strain DSM 17950 / CFBP 7177 / CIP 109463 / NCPPB 4357 / Et1/99).